The following is a 314-amino-acid chain: Putative S-adenosyl-L-methionine-dependent methyltransferase MAP_0256 (314 aa).

S-adenosyl-L-methionine-binding positions include D132 and 161 to 162 (DL).

This sequence belongs to the UPF0677 family.

In terms of biological role, exhibits S-adenosyl-L-methionine-dependent methyltransferase activity. This chain is Putative S-adenosyl-L-methionine-dependent methyltransferase MAP_0256, found in Mycolicibacterium paratuberculosis (strain ATCC BAA-968 / K-10) (Mycobacterium paratuberculosis).